A 584-amino-acid chain; its full sequence is 2-succinyl-5-enolpyruvyl-6-hydroxy-3-cyclohexene-1-carboxylate synthase (584 aa).

This sequence belongs to the TPP enzyme family. MenD subfamily. As to quaternary structure, homodimer. The cofactor is Mg(2+). It depends on Mn(2+) as a cofactor. Thiamine diphosphate serves as cofactor.

The enzyme catalyses isochorismate + 2-oxoglutarate + H(+) = 5-enolpyruvoyl-6-hydroxy-2-succinyl-cyclohex-3-ene-1-carboxylate + CO2. It participates in quinol/quinone metabolism; 1,4-dihydroxy-2-naphthoate biosynthesis; 1,4-dihydroxy-2-naphthoate from chorismate: step 2/7. Its pathway is quinol/quinone metabolism; menaquinone biosynthesis. Functionally, catalyzes the thiamine diphosphate-dependent decarboxylation of 2-oxoglutarate and the subsequent addition of the resulting succinic semialdehyde-thiamine pyrophosphate anion to isochorismate to yield 2-succinyl-5-enolpyruvyl-6-hydroxy-3-cyclohexene-1-carboxylate (SEPHCHC). In Bacillus thuringiensis subsp. konkukian (strain 97-27), this protein is 2-succinyl-5-enolpyruvyl-6-hydroxy-3-cyclohexene-1-carboxylate synthase.